Consider the following 222-residue polypeptide: Endonuclease V (222 aa).

Mg(2+) is bound by residues aspartate 34 and aspartate 102.

It belongs to the endonuclease V family. It depends on Mg(2+) as a cofactor.

It is found in the cytoplasm. It catalyses the reaction Endonucleolytic cleavage at apurinic or apyrimidinic sites to products with a 5'-phosphate.. In terms of biological role, DNA repair enzyme involved in the repair of deaminated bases. Selectively cleaves double-stranded DNA at the second phosphodiester bond 3' to a deoxyinosine leaving behind the intact lesion on the nicked DNA. This Photorhabdus laumondii subsp. laumondii (strain DSM 15139 / CIP 105565 / TT01) (Photorhabdus luminescens subsp. laumondii) protein is Endonuclease V.